The primary structure comprises 368 residues: Peptide chain release factor 2 (368 aa).

Gln250 is subject to N5-methylglutamine.

It belongs to the prokaryotic/mitochondrial release factor family. In terms of processing, methylated by PrmC. Methylation increases the termination efficiency of RF2.

Its subcellular location is the cytoplasm. In terms of biological role, peptide chain release factor 2 directs the termination of translation in response to the peptide chain termination codons UGA and UAA. In Rickettsia felis (strain ATCC VR-1525 / URRWXCal2) (Rickettsia azadi), this protein is Peptide chain release factor 2.